The sequence spans 373 residues: 1-deoxy-D-xylulose 5-phosphate reductoisomerase (373 aa).

T10, G11, S12, I13, R37, and N112 together coordinate NADPH. K113 is a 1-deoxy-D-xylulose 5-phosphate binding site. E114 lines the NADPH pocket. Residue D134 participates in Mn(2+) binding. S135, E136, S160, and H183 together coordinate 1-deoxy-D-xylulose 5-phosphate. E136 contacts Mn(2+). G189 contributes to the NADPH binding site. Residues S196, N201, K202, and E205 each coordinate 1-deoxy-D-xylulose 5-phosphate. E205 contacts Mn(2+).

It belongs to the DXR family. It depends on Mg(2+) as a cofactor. Requires Mn(2+) as cofactor.

The enzyme catalyses 2-C-methyl-D-erythritol 4-phosphate + NADP(+) = 1-deoxy-D-xylulose 5-phosphate + NADPH + H(+). The protein operates within isoprenoid biosynthesis; isopentenyl diphosphate biosynthesis via DXP pathway; isopentenyl diphosphate from 1-deoxy-D-xylulose 5-phosphate: step 1/6. Its function is as follows. Catalyzes the NADPH-dependent rearrangement and reduction of 1-deoxy-D-xylulose-5-phosphate (DXP) to 2-C-methyl-D-erythritol 4-phosphate (MEP). This is 1-deoxy-D-xylulose 5-phosphate reductoisomerase from Persephonella marina (strain DSM 14350 / EX-H1).